The chain runs to 313 residues: D-alanine--D-alanine ligase (313 aa).

One can recognise an ATP-grasp domain in the interval 108 to 308 (KLVWQQTGVP…YSELVVKVLS (201 aa)). ATP is bound at residue 138–193 (VAKLGLPLFVKPASEGSSVAVLKVKTADALPAALEEAATHDKIVIVEKSIEGGGEY). 3 residues coordinate Mg(2+): D262, E275, and N277.

The protein belongs to the D-alanine--D-alanine ligase family. Requires Mg(2+) as cofactor. It depends on Mn(2+) as a cofactor.

It localises to the cytoplasm. It carries out the reaction 2 D-alanine + ATP = D-alanyl-D-alanine + ADP + phosphate + H(+). Its pathway is cell wall biogenesis; peptidoglycan biosynthesis. Functionally, cell wall formation. The chain is D-alanine--D-alanine ligase from Burkholderia cenocepacia (strain ATCC BAA-245 / DSM 16553 / LMG 16656 / NCTC 13227 / J2315 / CF5610) (Burkholderia cepacia (strain J2315)).